Here is a 480-residue protein sequence, read N- to C-terminus: Protein DETOXIFICATION 15 (480 aa).

12 consecutive transmembrane segments (helical) span residues 36–56, 69–89, 118–138, 143–163, 180–200, 208–228, 255–275, 294–314, 326–346, 360–380, 396–416, and 428–448; these read GPLIAVSLLQFCLQIISVMFV, IATSFASVTGFTFLMGTASAM, LLSVPLSIVWANTEHFLVFFG, IAHLSGSYARFMIPSIFAYGL, VVICSGVTTSLHVIICWVLVL, GAAVANAISYWLNVILLSCYV, LVIPSAFMVCSLEMWSFELLV, VWMIPFGLSGAASTRVSNELG, RVVLSFSIVESILVGTVLILI, VVSHVASMLPILALGHSLDSF, IGAFVNLGSYYLVGVPFGLLL, and WLGIICALIVQGVCLSLITFF.

The protein belongs to the multi antimicrobial extrusion (MATE) (TC 2.A.66.1) family.

It is found in the membrane. This chain is Protein DETOXIFICATION 15, found in Arabidopsis thaliana (Mouse-ear cress).